Consider the following 1642-residue polypeptide: Cobra venom factor (1642 aa).

Residues 1–22 form the signal peptide; the sequence is MERMALYLVAALLIGFPGSSHG. 3 N-linked (GlcNAc...) asparagine glycosylation sites follow: asparagine 153, asparagine 158, and asparagine 209. Mg(2+)-binding residues include proline 516, aspartate 539, valine 540, and aspartate 542. Intrachain disulfides connect cysteine 544/cysteine 801, cysteine 609/cysteine 644, cysteine 677/cysteine 704, cysteine 678/cysteine 711, cysteine 691/cysteine 712, cysteine 857/cysteine 1492, cysteine 1340/cysteine 1468, cysteine 1368/cysteine 1437, cysteine 1485/cysteine 1490, cysteine 1497/cysteine 1569, cysteine 1516/cysteine 1640, and cysteine 1616/cysteine 1625. Residues 650 to 732 constitute a propeptide that is removed on maturation; that stretch reads RRRRSSVLLL…QRESELFLAR (83 aa). Residues 654–732 form a C3a-like domain region; the sequence is SSVLLLDSNA…QRESELFLAR (79 aa). One can recognise an Anaphylatoxin-like domain in the interval 677–712; that stretch reads CCEDVMHENPMGYTCEKRAKYIQEGDACKAAFLECC. The interval 736–747 is factor B binding site; the sequence is EDGFIADSDIIS. A propeptide spanning residues 985-1263 is cleaved from the precursor; it reads HLIITPSGCG…VMAFQALAEY (279 aa). The segment at 985–1263 is C3d-like domain; that stretch reads HLIITPSGCG…VMAFQALAEY (279 aa). Residues 993–996 constitute a cross-link (isoglutamyl cysteine thioester (Cys-Gln)); the sequence is CGEQ. A factor H binding site region spans residues 1190 to 1253; the sequence is VLMAASTGRD…GETYGQTQAT (64 aa). Asparagine 1346 carries N-linked (GlcNAc...) asparagine glycosylation. The NTR domain maps to 1497-1640; sequence CSSLNHQERI…FSYTLTEFGC (144 aa).

The protein belongs to the venom complement C3 homolog family. In terms of assembly, heterotrimer of alpha, beta and gamma chains; disulfide-linked. Is active with factor B in the presence of factor D. First processed by the removal of 4 Arg residues by furin-type protease, forming two chains, alpha and gamma/beta precursor, linked by a disulfide bond. Probably, the cobrin cleaves the C3a-like domain and then the C3d-like domain, generating the mature cobra venom factor (CVF). This mature CVF is composed of three chains: alpha, gamma and beta. Post-translationally, contains 3 N-linked oligosaccharide chains, two in the alpha-chain and one in the beta-chain. Glycosylation is not required for the biological activity. However, it contributes to the immunogenicity of CVF. The carbohydrate content is 7.4. The major oligosaccharide is a symmetric fucosylated biantennary complex-type chain with an unusual alpha-galactosylated Le(x) structure at its non-reducing end. As to expression, expressed by the venom gland.

The protein localises to the secreted. Functionally, complement-activating protein in cobra venom. It is a structural and functional analog of complement component C3b, the activated form of C3. It binds factor B (CFB), which is subsequently cleaved by factor D (CFD) to form the bimolecular complex CVF/Bb. CVF/Bb is a C3/C5 convertase that cleaves both complement components C3 and C5. Structurally, it resembles the C3b degradation product C3c, which is not able to form a C3/C5 convertase. Unlike C3b/Bb, CVF/Bb is a stable complex and completely resistant to the actions of complement regulatory factors H (CFH) and I (CFI). Therefore, CVF continuously activates complement resulting in the depletion of complement activity. The chain is Cobra venom factor from Naja kaouthia (Monocled cobra).